The primary structure comprises 533 residues: 2-isopropylmalate synthase (533 aa).

One can recognise a Pyruvate carboxyltransferase domain in the interval 8–269; the sequence is ILIFDTTLRD…YFNPFLGRPA (262 aa). Mn(2+) contacts are provided by Asp-17, His-208, His-210, and Asn-244. The tract at residues 408–533 is regulatory domain; the sequence is RLERVQVSCG…REHPPVVASL (126 aa).

This sequence belongs to the alpha-IPM synthase/homocitrate synthase family. LeuA type 1 subfamily. In terms of assembly, homodimer. It depends on Mn(2+) as a cofactor.

The protein localises to the cytoplasm. The catalysed reaction is 3-methyl-2-oxobutanoate + acetyl-CoA + H2O = (2S)-2-isopropylmalate + CoA + H(+). It participates in amino-acid biosynthesis; L-leucine biosynthesis; L-leucine from 3-methyl-2-oxobutanoate: step 1/4. Catalyzes the condensation of the acetyl group of acetyl-CoA with 3-methyl-2-oxobutanoate (2-ketoisovalerate) to form 3-carboxy-3-hydroxy-4-methylpentanoate (2-isopropylmalate). In Synechocystis sp. (strain ATCC 27184 / PCC 6803 / Kazusa), this protein is 2-isopropylmalate synthase.